Reading from the N-terminus, the 247-residue chain is ATP synthase subunit a, chloroplastic (247 aa).

5 helical membrane-spanning segments follow: residues 38–58 (QVLI…IIAV), 95–115 (VPFI…GALL), 133–153 (DINT…YAGL), 199–219 (LVVV…VMFL), and 220–240 (GLFT…AYIG).

The protein belongs to the ATPase A chain family. In terms of assembly, F-type ATPases have 2 components, CF(1) - the catalytic core - and CF(0) - the membrane proton channel. CF(1) has five subunits: alpha(3), beta(3), gamma(1), delta(1), epsilon(1). CF(0) has four main subunits: a, b, b' and c.

It is found in the plastid. The protein localises to the chloroplast thylakoid membrane. Key component of the proton channel; it plays a direct role in the translocation of protons across the membrane. The polypeptide is ATP synthase subunit a, chloroplastic (Phalaenopsis aphrodite subsp. formosana (Moth orchid)).